Reading from the N-terminus, the 538-residue chain is Fusion glycoprotein F0 (538 aa).

A signal peptide spans 1 to 18 (MDVRICLLLFLISNPSSC). Topologically, residues 19–489 (IQETYNEESC…LLGADAKSKA (471 aa)) are extracellular. 7 disulfide bridges follow: cysteine 28/cysteine 407, cysteine 60/cysteine 182, cysteine 283/cysteine 311, cysteine 292/cysteine 301, cysteine 326/cysteine 335, cysteine 350/cysteine 361, and cysteine 384/cysteine 390. Residue asparagine 57 is glycosylated (N-linked (GlcNAc...) asparagine; by host). Fusion peptide stretches follow at residues 103–124 (FVLG…GVAL) and 103–127 (FVLG…LAKT). Residues 125-153 (AKTIRLEGEVKAIKNALRNTNEAVSTLGN) adopt a coiled-coil conformation. Asparagine 353 is a glycosylation site (N-linked (GlcNAc...) asparagine; by host). Positions 459–484 (ALDQVFESIDRSQDLIDKSNDLLGAD) form a coiled coil. A helical transmembrane segment spans residues 490–510 (GIAIAIVVLVILGIFFLLAVI). At 511–538 (YYCSRVRKTKPKHDYPATTGHSSMAYVS) the chain is on the cytoplasmic side. Cysteine 513 carries S-palmitoyl cysteine; by host lipidation.

Belongs to the paramyxoviruses fusion glycoprotein family. As to quaternary structure, homotrimer. Heterodimer with fusion protein F2; disulfide-linked. As a heterodimer with F2, interacts with host heparan sulfate. Part of a complex composed of F1, F2 and G glycoproteins. In terms of assembly, homotrimer. Heterodimer with fusion protein F1; disulfide-linked. As a heterodimer with F1, interacts with host heparan sulfate. Part of a complex composed of F1, F2 and G glycoproteins. Post-translationally, the F glycoprotein is synthesized as a F0 inactive precursor that is heavily N-glycosylated and processed.

Its subcellular location is the host Golgi apparatus membrane. The protein localises to the virion membrane. It is found in the host cell membrane. Inactive precursor that is cleaved to give rise to the mature F1 and F2 fusion glycoproteins. In terms of biological role, class I viral fusion protein. Under the current model, the protein has at least 3 conformational states: pre-fusion native state, pre-hairpin intermediate state, and post-fusion hairpin state. During viral and plasma cell membrane fusion, the coiled coil regions assume a trimer-of-hairpins structure, positioning the fusion peptide in close proximity to the C-terminal region of the ectodomain. The formation of this structure appears to drive apposition and subsequent fusion of viral and cellular membranes leading to delivery of the nucleocapsid into the cytoplasm. This fusion is pH independent and occurs at the plasma or endosomal membrane. The trimer of F1-F2 (F protein) also facilitates the attachment to host cell by binding to host heparan sulfate. Functionally, major determinant of the species specificity of RSV infection. The trimer of F1-F2 (F protein) also facilitates the attachment to host cell by binding to host heparan sulfate. In Meleagris gallopavo (Wild turkey), this protein is Fusion glycoprotein F0 (F).